Reading from the N-terminus, the 260-residue chain is Proliferating cell nuclear antigen (260 aa).

Residues Arg61–Lys80 mediate DNA binding.

The protein belongs to the PCNA family. As to quaternary structure, homotrimer. Forms a complex with activator 1 heteropentamer in the presence of ATP. Interacts with E2f. Interacts with the catalytic subunits of two DNA polymerase complexes: PolD1 from the delta complex and PolE1/DNApol-epsilon255 from the epsilon complex. As to expression, expressed at high levels in adult ovary.

It localises to the nucleus. Its subcellular location is the chromosome. It is found in the cytoplasm. In terms of biological role, likely to be an auxiliary protein of DNA polymerase delta complex and is probably involved in the control of DNA replication and repair by increasing the polymerase's processibility. The sequence is that of Proliferating cell nuclear antigen from Drosophila melanogaster (Fruit fly).